The chain runs to 904 residues: Protein translocase subunit SecA (904 aa).

ATP contacts are provided by residues Q89, G107–T111, and D496. The segment at G870–R904 is disordered. Residues S876–S889 are compositionally biased toward low complexity.

The protein belongs to the SecA family. Monomer and homodimer. Part of the essential Sec protein translocation apparatus which comprises SecA, SecYEG and auxiliary proteins SecDF. Other proteins may also be involved.

It localises to the cell inner membrane. The protein resides in the cytoplasm. The catalysed reaction is ATP + H2O + cellular proteinSide 1 = ADP + phosphate + cellular proteinSide 2.. Its function is as follows. Part of the Sec protein translocase complex. Interacts with the SecYEG preprotein conducting channel. Has a central role in coupling the hydrolysis of ATP to the transfer of proteins into and across the cell membrane, serving as an ATP-driven molecular motor driving the stepwise translocation of polypeptide chains across the membrane. The polypeptide is Protein translocase subunit SecA (Leptospira borgpetersenii serovar Hardjo-bovis (strain L550)).